The sequence spans 470 residues: Ubiquitin carboxyl-terminal hydrolase calypso (470 aa).

The 231-residue stretch at 11–241 (GWLELESDPG…ITHKLKMLRT (231 aa)) folds into the UCH catalytic domain. Cys98 functions as the Nucleophile in the catalytic mechanism. The active-site Proton donor is the His177. A coiled-coil region spans residues 260-280 (ESRSQAEIRETVDKIKKEEQE). The ULD domain occupies 392-420 (NYDEFICTFLSMLAYQGELGDLVTQHLVT). A positively charged C-terminal tail required for binding nucleosomes region spans residues 422 to 470 (RKPSLGGVQNSGSRGVVRNYNKKSTTNGSSPKTPSSKRRRGRTKYRKRK). Positions 423–434 (KPSLGGVQNSGS) are enriched in polar residues. The interval 423 to 470 (KPSLGGVQNSGSRGVVRNYNKKSTTNGSSPKTPSSKRRRGRTKYRKRK) is disordered. Over residues 456–470 (SSKRRRGRTKYRKRK) the composition is skewed to basic residues.

It belongs to the peptidase C12 family. BAP1 subfamily. As to quaternary structure, catalytic component of the polycomb repressive deubiquitinase (PR-DUB) complex, at least composed of caly/calypso, Asx and sba (MBD5/6 homolog). The PR-DUB complex associates with nucleosomes to mediate deubiquitination of histone H2AK118ub1 substrates; the association requires the positively charged C-terminal tail of caly, probably due to direct binding of DNA. Interacts (via ULD domain) with Asx (via DEUBAD domain); the interaction produces a stable heterodimer with a composite binding site for ubiquitin. Homodimerizes (via coiled-coil hinge-region between the UCH and ULD domains) to mediate assembly of 2 copies of the caly-Asx heterodimer into a bisymmetric tetramer; dimerization enhances PR-DUB association with nucleosomes.

Its subcellular location is the nucleus. It catalyses the reaction Thiol-dependent hydrolysis of ester, thioester, amide, peptide and isopeptide bonds formed by the C-terminal Gly of ubiquitin (a 76-residue protein attached to proteins as an intracellular targeting signal).. Catalytic component of the polycomb repressive deubiquitinase (PR-DUB) complex, a complex that specifically mediates deubiquitination of histone H2A monoubiquitinated at 'Lys-119' (H2AK118ub1). Mediates bisymmetric organization of the PR-DUB complex and is involved in association with nucleosomes to mediate deubiquitination. Does not deubiquitinate monoubiquitinated histone H2B. Required to maintain the transcriptionally repressive state of homeotic genes throughout development. The PR-DUB complex has weak or no activity toward 'Lys-48'- and 'Lys-63'-linked polyubiquitin chains. Polycomb group (PcG) protein. The sequence is that of Ubiquitin carboxyl-terminal hydrolase calypso from Culex quinquefasciatus (Southern house mosquito).